A 101-amino-acid chain; its full sequence is Large ribosomal subunit protein uL24 (101 aa).

This sequence belongs to the universal ribosomal protein uL24 family. As to quaternary structure, part of the 50S ribosomal subunit.

In terms of biological role, one of two assembly initiator proteins, it binds directly to the 5'-end of the 23S rRNA, where it nucleates assembly of the 50S subunit. Functionally, one of the proteins that surrounds the polypeptide exit tunnel on the outside of the subunit. The sequence is that of Large ribosomal subunit protein uL24 from Borrelia hermsii (strain HS1 / DAH).